The sequence spans 216 residues: Small ribosomal subunit protein uS3c (216 aa).

A KH type-2 domain is found at isoleucine 43–glutamate 118.

Belongs to the universal ribosomal protein uS3 family. As to quaternary structure, part of the 30S ribosomal subunit.

Its subcellular location is the plastid. The protein resides in the chloroplast. In Dioscorea elephantipes (Elephant's foot yam), this protein is Small ribosomal subunit protein uS3c (rps3).